A 161-amino-acid chain; its full sequence is Zinc finger A20 and AN1 domain-containing stress-associated protein 9 (161 aa).

An A20-type zinc finger spans residues 17–51 (PEAPILCVNNCGFFGSSMTNNMCSKCYRDFVKVTT). Zn(2+) is bound by residues Cys23, Cys27, Cys39, and Cys42. A disordered region spans residues 62-99 (FTPASSSKTPLEPAKPDEVPAAAVEDKQAAQEPPKPPS). Over residues 75–90 (AKPDEVPAAAVEDKQA) the composition is skewed to basic and acidic residues. The AN1-type zinc finger occupies 96 to 142 (KPPSNRCLSCRKKVGLTGFQCRCGGTFCSTHRYTEAHDCTFDYKKAG). Residues Cys102, Cys105, Cys116, Cys118, Cys123, His126, His132, and Cys134 each contribute to the Zn(2+) site.

Functionally, may be involved in environmental stress response. The sequence is that of Zinc finger A20 and AN1 domain-containing stress-associated protein 9 (SAP9) from Oryza sativa subsp. japonica (Rice).